We begin with the raw amino-acid sequence, 236 residues long: 2,3,4,5-tetrahydropyridine-2,6-dicarboxylate N-acetyltransferase (236 aa).

The protein belongs to the transferase hexapeptide repeat family. DapH subfamily.

It catalyses the reaction (S)-2,3,4,5-tetrahydrodipicolinate + acetyl-CoA + H2O = L-2-acetamido-6-oxoheptanedioate + CoA. The protein operates within amino-acid biosynthesis; L-lysine biosynthesis via DAP pathway; LL-2,6-diaminopimelate from (S)-tetrahydrodipicolinate (acetylase route): step 1/3. Its function is as follows. Catalyzes the transfer of an acetyl group from acetyl-CoA to tetrahydrodipicolinate. The sequence is that of 2,3,4,5-tetrahydropyridine-2,6-dicarboxylate N-acetyltransferase from Geobacillus kaustophilus (strain HTA426).